A 341-amino-acid polypeptide reads, in one-letter code: Anthranilate phosphoribosyltransferase (341 aa).

Residues glycine 84, 87-88 (GD), threonine 92, 94-97 (NVTT), 112-120 (KCGNRSVSS), and serine 124 contribute to the 5-phospho-alpha-D-ribose 1-diphosphate site. An anthranilate-binding site is contributed by glycine 84. Threonine 96 serves as a coordination point for Mg(2+). Asparagine 115 is a binding site for anthranilate. Arginine 170 provides a ligand contact to anthranilate. Positions 228 and 229 each coordinate Mg(2+).

It belongs to the anthranilate phosphoribosyltransferase family. Homodimer. Requires Mg(2+) as cofactor.

It carries out the reaction N-(5-phospho-beta-D-ribosyl)anthranilate + diphosphate = 5-phospho-alpha-D-ribose 1-diphosphate + anthranilate. It functions in the pathway amino-acid biosynthesis; L-tryptophan biosynthesis; L-tryptophan from chorismate: step 2/5. Its function is as follows. Catalyzes the transfer of the phosphoribosyl group of 5-phosphorylribose-1-pyrophosphate (PRPP) to anthranilate to yield N-(5'-phosphoribosyl)-anthranilate (PRA). This Corynebacterium diphtheriae (strain ATCC 700971 / NCTC 13129 / Biotype gravis) protein is Anthranilate phosphoribosyltransferase.